The primary structure comprises 134 residues: Beta-synuclein (134 aa).

2 repeat units span residues 20-30 (EKTKQGVTEAA) and 31-41 (EKTKEGVLYVG). A 4 X 11 AA tandem repeats of [EGS]-K-T-K-[EQ]-[GQ]-V-X(4) region spans residues 20–67 (EKTKQGVTEAAEKTKEGVLYVGSKTREGVVQGVASVAEKTKEQASHLG). The stretch at 42–56 (SKTREGVVQGVASVA) is one 3; approximate repeat. Repeat unit 4 spans residues 57–67 (EKTKEQASHLG). Residues 89–134 (FPTDLKPEEVAQEAAEEPLIEPLMEPEGESYEDPPQEEYQEYEPEA) form a disordered region. The span at 98 to 134 (VAQEAAEEPLIEPLMEPEGESYEDPPQEEYQEYEPEA) shows a compositional bias: acidic residues. The residue at position 118 (Ser118) is a Phosphoserine; by BARK1, CK2 and GRK5.

Belongs to the synuclein family. Post-translationally, phosphorylated. Phosphorylation by G-protein coupled receptor kinases (GRK) is more efficient than phosphorylation by CK1, CK2 and CaM-kinase II. In terms of tissue distribution, expressed predominantly in brain; concentrated in presynaptic nerve terminals.

It is found in the cytoplasm. Non-amyloid component of senile plaques found in Alzheimer disease. Could act as a regulator of SNCA aggregation process. Protects neurons from staurosporine and 6-hydroxy dopamine (6OHDA)-stimulated caspase activation in a p53/TP53-dependent manner. Contributes to restore the SNCA anti-apoptotic function abolished by 6OHDA. Not found in the Lewy bodies associated with Parkinson disease. This chain is Beta-synuclein (SNCB), found in Homo sapiens (Human).